We begin with the raw amino-acid sequence, 217 residues long: MSKLLHIDSSILGSNSVSRQLTAQIVASWRAAHPATEVSYLDLAMDSPSHLSVESLGFRLPAGTADLSEVQQRENAISEALVSQFMAADVLVIGAPLYNFSIPSQLKAWIDRVAQAGRTFKYTEKGPVGLAGGKTIIVASARGGMYSTSDAGNAMEHQESYLKTVFGFFGVTDVRFVRAEGLAMGEAAKAAALAAAQVEILAQTHSAANQPQAVLVA.

FMN contacts are provided by residues Ser10 and 16 to 18 (SVS).

It belongs to the azoreductase type 1 family. As to quaternary structure, homodimer. FMN serves as cofactor.

The enzyme catalyses 2 a quinone + NADH + H(+) = 2 a 1,4-benzosemiquinone + NAD(+). It carries out the reaction N,N-dimethyl-1,4-phenylenediamine + anthranilate + 2 NAD(+) = 2-(4-dimethylaminophenyl)diazenylbenzoate + 2 NADH + 2 H(+). Its function is as follows. Quinone reductase that provides resistance to thiol-specific stress caused by electrophilic quinones. In terms of biological role, also exhibits azoreductase activity. Catalyzes the reductive cleavage of the azo bond in aromatic azo compounds to the corresponding amines. The polypeptide is FMN-dependent NADH:quinone oxidoreductase (Polaromonas naphthalenivorans (strain CJ2)).